The primary structure comprises 303 residues: DCN1-like protein 3 (303 aa).

The tract at residues 1–40 is disordered; it reads MGQCVTKCKNPSSTLGSKNGERESSKPHKRSSSHKEEHMS. Gly2 is lipidated: N-myristoyl glycine. The DCUN1 domain occupies 85–277; sequence SSLQRIEELF…LFDTFVEWEM (193 aa).

As to quaternary structure, may interact (via the DCUN1 domain) with unneddylated cullins.

The protein resides in the cell membrane. The protein localises to the cytoplasm. It is found in the nucleus. It localises to the perinuclear region. Functionally, contributes to the neddylation of all cullins by transferring NEDD8 from N-terminally acetylated NEDD8-conjugating E2s enzyme to different cullin C-terminal domain-RBX complexes. At the cell membrane, can promote and as well inhibit cullins neddylation. This is DCN1-like protein 3 from Xenopus laevis (African clawed frog).